Here is a 324-residue protein sequence, read N- to C-terminus: Homocysteine S-methyltransferase 1 (324 aa).

The Hcy-binding domain occupies 6–320 (IKELIVEHPG…KDIAEIASAV (315 aa)). Zn(2+)-binding residues include Cys238, Cys305, and Cys306.

Zn(2+) serves as cofactor.

It is found in the cytoplasm. The catalysed reaction is S-methyl-L-methionine + L-homocysteine = 2 L-methionine + H(+). Its function is as follows. Homocysteine S-methyltransferase involved in the conversion of S-adenosylmethionine (AdoMet) to methionine to control the methionine/AdoMet ratio. Also converts S-methylmethionine (SMM) to methionine. The sequence is that of Homocysteine S-methyltransferase 1 (MHT1) from Saccharomyces cerevisiae (strain ATCC 204508 / S288c) (Baker's yeast).